The primary structure comprises 219 residues: MSIQVFCDFDGTITNNDNIMSIMEKFAPPEAEEVKNRILSQELSIQEGVSQLFQFIPTNLHDEIIQFLIETAEIRNGFHEFIQFVNKNNISFYVISGGMDFFVYPLLQGLIPKEQIYCNETDFSNEYITVNWPHPCDHHCQNHCGLCKSSLIRKLSNTNDFHIVIGDSITDLQAAKQADKVFARDFLITKCEENHISYTPFESFHDIQNELKHLLEVKL.

It belongs to the HAD-like hydrolase superfamily. MtnX family.

The catalysed reaction is 2-hydroxy-5-methylsulfanyl-3-oxopent-1-enyl phosphate + H2O = 1,2-dihydroxy-5-(methylsulfanyl)pent-1-en-3-one + phosphate. Its pathway is amino-acid biosynthesis; L-methionine biosynthesis via salvage pathway; L-methionine from S-methyl-5-thio-alpha-D-ribose 1-phosphate: step 4/6. Its function is as follows. Dephosphorylates 2-hydroxy-3-keto-5-methylthiopentenyl-1-phosphate (HK-MTPenyl-1-P) yielding 1,2-dihydroxy-3-keto-5-methylthiopentene (DHK-MTPene). The polypeptide is 2-hydroxy-3-keto-5-methylthiopentenyl-1-phosphate phosphatase (Bacillus cereus (strain ATCC 10987 / NRS 248)).